The sequence spans 468 residues: MKHRIQHIHFVGVGGSGMSGIAEVLLNLGYTISGSDLNESAVTRRLAELGMRIAIGHDRANVAGAGAIVTSTAVAGDNPEVLAARAARIPVVPRAVMLAELMRLKRGIAVAGTHGKTTTTSLVASVLAAGGLDPTFVIGGRLTSAGANARLGQGEYIVVEADESDASFLNLLPVMAIVTNIDADHMDTYGHDVARLKSAFIEFTQRLPFYGSAILCADDANVREIMPFVSRPITTYGLSPDAQVCAQDVQADGTRMRFTVQRRDRDVVLPALQVELNLPGLHNVRNALAAIAVATELGVDDAAIREALAAFKGVGRRFTQWGDLPVPAAHGGGIFTLVDDYGHHPVEMAATLAAARGAWPQRRIVLAFQPHRYTRTRDCFEDFVRVLGSADGVLLTEVYAAGEAPLVAADGRALSRALRVAGKVEPVFVEDVGELPQAILDFVRDGDVVVVMGAGSISKTPALVGELA.

112–118 (GTHGKTT) is a binding site for ATP.

Belongs to the MurCDEF family.

The protein localises to the cytoplasm. The enzyme catalyses UDP-N-acetyl-alpha-D-muramate + L-alanine + ATP = UDP-N-acetyl-alpha-D-muramoyl-L-alanine + ADP + phosphate + H(+). It participates in cell wall biogenesis; peptidoglycan biosynthesis. Cell wall formation. The polypeptide is UDP-N-acetylmuramate--L-alanine ligase (Bordetella pertussis (strain Tohama I / ATCC BAA-589 / NCTC 13251)).